A 100-amino-acid polypeptide reads, in one-letter code: uncharacterized protein (100 aa).

The tract at residues 42–84 is disordered; it reads PGEPWRTAGGIGEGGAGGDGAAAGGEGDVHGRPAGAEDGEDGA. The segment covering 50-67 has biased composition (gly residues); sequence GGIGEGGAGGDGAAAGGE.

This is an uncharacterized protein from Torque teno tamarin virus (isolate So-TTV2).